The following is a 103-amino-acid chain: Large ribosomal subunit protein uL24 (103 aa).

The protein belongs to the universal ribosomal protein uL24 family. As to quaternary structure, part of the 50S ribosomal subunit.

In terms of biological role, one of two assembly initiator proteins, it binds directly to the 5'-end of the 23S rRNA, where it nucleates assembly of the 50S subunit. Functionally, one of the proteins that surrounds the polypeptide exit tunnel on the outside of the subunit. This is Large ribosomal subunit protein uL24 from Actinobacillus succinogenes (strain ATCC 55618 / DSM 22257 / CCUG 43843 / 130Z).